A 169-amino-acid polypeptide reads, in one-letter code: MPLLDSFTVDHTRMNAPAVRVAKTMKSPSGDTITVFDLRFCAPNKDILSERGIHTLEHLYAGFMRNHLNGDNVEIIDISPMGCRTGFYMSLIGSPKEADVAEAWLASMNDVLTVASQSEIPELNEYQCGTFNMHSLEQAQGIARSIIASGISVNKNDELKLSEKILKGL.

Fe cation-binding residues include His-54, His-58, and Cys-128.

Belongs to the LuxS family. As to quaternary structure, homodimer. Requires Fe cation as cofactor.

It carries out the reaction S-(5-deoxy-D-ribos-5-yl)-L-homocysteine = (S)-4,5-dihydroxypentane-2,3-dione + L-homocysteine. Involved in the synthesis of autoinducer 2 (AI-2) which is secreted by bacteria and is used to communicate both the cell density and the metabolic potential of the environment. The regulation of gene expression in response to changes in cell density is called quorum sensing. Catalyzes the transformation of S-ribosylhomocysteine (RHC) to homocysteine (HC) and 4,5-dihydroxy-2,3-pentadione (DPD). The chain is S-ribosylhomocysteine lyase from Shewanella woodyi (strain ATCC 51908 / MS32).